The sequence spans 396 residues: Trypacidin cluster transcription factor (396 aa).

A DNA-binding region (zn(2)-C6 fungal-type) is located at residues 20 to 47 (CRACGLSKVRCSKEKPTCSRCRRRGTVC). Disordered stretches follow at residues 54–120 (RPGR…LSTV), 190–218 (DPAPPDQSLPATTTIGRRASPPSGRESEA), and 346–365 (MHGAQGASPGQAFHGTPAPL). A compositionally biased stretch (basic and acidic residues) spans 57-71 (RKPDSRSEVEPEPGH). The segment covering 72-82 (LSHPLPSPESS) has biased composition (low complexity).

Specifically expressed in conidia.

The protein resides in the nucleus. In terms of biological role, transcription factor that regulates the expression of the gene clusters that mediate the biosynthesis of trypacidin, a metabolite with antiprotozoal activity and a possible role in the infection process. Trypacidin is toxic for human pulmonary and bronchial epithelial cells by initiating the intracellular formation of nitric oxide (NO) and hydrogen peroxide (H(2)O(2)), thus triggering host necrotic cell death. The polypeptide is Trypacidin cluster transcription factor (Aspergillus fumigatus (strain ATCC MYA-4609 / CBS 101355 / FGSC A1100 / Af293) (Neosartorya fumigata)).